A 366-amino-acid chain; its full sequence is tRNA-queuosine alpha-mannosyltransferase (366 aa).

The protein belongs to the glycosyltransferase group 1 family. Glycosyltransferase 4 subfamily.

It is found in the cytoplasm. The protein localises to the nucleus. It catalyses the reaction queuosine(34) in tRNA(Asp) + GDP-alpha-D-mannose = O-4''-alpha-D-mannosylqueuosine(34) in tRNA(Asp) + GDP + H(+). Its function is as follows. Glycosyltransferase that specifically catalyzes mannosylation of cytoplasmic tRNA(Asp) modified with queuosine at position 34 (queuosine(34)). Mannosylates the cyclopentene moiety of queuosine(34) in tRNA(Asp) to form mannosyl-queuosine(34). Mannosylation of queuosine(34) in tRNA(Asp) is required to slow-down elongation at cognate codons, GAC and GAU, thereby regulating protein translation. In Bos taurus (Bovine), this protein is tRNA-queuosine alpha-mannosyltransferase (GTDC1).